The chain runs to 350 residues: Ion-translocating oxidoreductase complex subunit D (350 aa).

4 helical membrane passes run 37 to 57, 78 to 109, 124 to 144, and 158 to 178; these read YYFGYGTLVQLLLAITVAYLA, ALVTASLLAVAIPPLAPWWLIVIGTLFAIVIV, AMAAYVLLLISFPVQMTSWVA, and TFNSIFQLNAGYAADFFHLAI. The residue at position 185 (Thr-185) is an FMN phosphoryl threonine. The next 5 membrane-spanning stretches (helical) occupy residues 212–232, 239–259, 264–284, 298–318, and 319–339; these read SVGEGWFWVNMAYLVGGLVML, WHISGAIVLTLFVCASIGFLI, FVSPIMHLFSGGTMLAAFFIA, LIFGAMIGLLIYLIRTFGGYP, and DAVAFAVLLANMCAPFIDYYV.

This sequence belongs to the NqrB/RnfD family. As to quaternary structure, the complex is composed of six subunits: RnfA, RnfB, RnfC, RnfD, RnfE and RnfG. FMN serves as cofactor.

It is found in the cell inner membrane. Part of a membrane-bound complex that couples electron transfer with translocation of ions across the membrane. This chain is Ion-translocating oxidoreductase complex subunit D, found in Shewanella frigidimarina (strain NCIMB 400).